The following is an 852-amino-acid chain: Metastasis-associated in colon cancer protein 1 (852 aa).

Ser-19 bears the Phosphoserine mark. The region spanning 212-349 (VTIACKVNHQ…LSQVMYLVVA (138 aa)) is the ZU5 domain. The 71-residue stretch at 549–619 (NFSNYGVTLK…HCKNVKVISK (71 aa)) folds into the SH3 domain.

As to quaternary structure, interacts with FASLG. As to expression, preferentially expressed in metastasizing tumors.

The protein resides in the cytoplasm. Its subcellular location is the nucleus. Acts as a transcription activator for MET and as a key regulator of HGF-MET signaling. Promotes cell motility, proliferation and hepatocyte growth factor (HGF)-dependent scattering in vitro and tumor growth and metastasis in vivo. This chain is Metastasis-associated in colon cancer protein 1 (MACC1), found in Homo sapiens (Human).